Consider the following 256-residue polypeptide: Isoprenyl transferase 1 (256 aa).

The active site involves Asp34. Residue Asp34 participates in Mg(2+) binding. Substrate-binding positions include 35-38 (GNRR), Trp39, His52, and 80-82 (STE). Residue Asn83 is the Proton acceptor of the active site. Substrate is bound by residues Arg86, Arg205, and 211-213 (RLS). Glu224 contacts Mg(2+).

Belongs to the UPP synthase family. As to quaternary structure, homodimer. The cofactor is Mg(2+).

Its function is as follows. Catalyzes the condensation of isopentenyl diphosphate (IPP) with allylic pyrophosphates generating different type of terpenoids. In Corynebacterium efficiens (strain DSM 44549 / YS-314 / AJ 12310 / JCM 11189 / NBRC 100395), this protein is Isoprenyl transferase 1.